The primary structure comprises 173 residues: C-phycocyanin-3 beta subunit (173 aa).

N4-methylasparagine is present on Asn73. (2R,3E)-phycocyanobilin contacts are provided by Cys83 and Cys154.

This sequence belongs to the phycobiliprotein family. In terms of assembly, heterodimer of an alpha and a beta subunit, which further assembles into trimers and the trimers into hexamers. In terms of processing, contains two covalently linked bilin chromophores.

The protein localises to the cellular thylakoid membrane. Functionally, light-harvesting photosynthetic bile pigment-protein from the phycobiliprotein complex (phycobilisome, PBS). Phycocyanin is the major phycobiliprotein in the PBS rod. This chain is C-phycocyanin-3 beta subunit (cpcB3), found in Microchaete diplosiphon (Fremyella diplosiphon).